A 120-amino-acid chain; its full sequence is UPF0102 protein NT01CX_2205 (120 aa).

It belongs to the UPF0102 family.

This Clostridium novyi (strain NT) protein is UPF0102 protein NT01CX_2205.